We begin with the raw amino-acid sequence, 478 residues long: Dynein regulatory complex subunit 4 (478 aa).

The segment covering Met1 to Ala12 has biased composition (basic residues). Positions Met1 to Glu29 are disordered. The regulates microtubule-binding stretch occupies residues Met1 to Ala114. Coiled-coil stretches lie at residues Glu24 to Glu207 and Leu242 to Arg426. The interval Glu115–Met258 is microtubule-binding. The interval Gln357–Thr478 is interaction with SMO.

Belongs to the DRC4 family. As to quaternary structure, component of the nexin-dynein regulatory complex (N-DRC). Interacts with microtubules. Interacts with SMO. Interacts (via coiled-coil domains) with RAB3B (in GTP-bound form). Interacts with DRC1. Interacts with DRC7. Highly expressed in adult testes and lung. Weakly or not expressed in other tested tissues.

It localises to the cytoplasm. The protein resides in the cytoskeleton. Its subcellular location is the cell projection. The protein localises to the cilium. It is found in the flagellum. It localises to the cilium axoneme. The protein resides in the cilium basal body. Its subcellular location is the golgi apparatus. The protein localises to the flagellum axoneme. Its function is as follows. Component of the nexin-dynein regulatory complex (N-DRC), a key regulator of ciliary/flagellar motility which maintains the alignment and integrity of the distal axoneme and regulates microtubule sliding in motile axonemes. Plays an important role in the assembly of the N-DRC linker. Plays dual roles at both the primary (or non-motile) cilia to regulate hedgehog signaling and in motile cilia to coordinate cilia movement. Required for proper motile cilia functioning. Positively regulates ciliary smoothened (SMO)-dependent Hedgehog (Hh) signaling pathway by facilitating the trafficking of SMO into the cilium and the stimulation of SMO activity in a GRK2-dependent manner. May play a role in the spermatozoa motility. This chain is Dynein regulatory complex subunit 4 (Gas8), found in Mus musculus (Mouse).